Here is a 211-residue protein sequence, read N- to C-terminus: Ribosomal RNA small subunit methyltransferase G (211 aa).

Residues glycine 73, phenylalanine 78, valine 124–glutamate 125, and arginine 137 each bind S-adenosyl-L-methionine.

This sequence belongs to the methyltransferase superfamily. RNA methyltransferase RsmG family.

The protein resides in the cytoplasm. Functionally, specifically methylates the N7 position of a guanine in 16S rRNA. The protein is Ribosomal RNA small subunit methyltransferase G of Christiangramia forsetii (strain DSM 17595 / CGMCC 1.15422 / KT0803) (Gramella forsetii).